A 419-amino-acid polypeptide reads, in one-letter code: Serine hydroxymethyltransferase (419 aa).

Residues Leu-121 and Gly-125–Leu-127 contribute to the (6S)-5,6,7,8-tetrahydrofolate site. Lys-230 carries the N6-(pyridoxal phosphate)lysine modification. A (6S)-5,6,7,8-tetrahydrofolate-binding site is contributed by Ser-355–Phe-357.

Belongs to the SHMT family. In terms of assembly, homodimer. Pyridoxal 5'-phosphate is required as a cofactor.

The protein resides in the cytoplasm. It carries out the reaction (6R)-5,10-methylene-5,6,7,8-tetrahydrofolate + glycine + H2O = (6S)-5,6,7,8-tetrahydrofolate + L-serine. It functions in the pathway one-carbon metabolism; tetrahydrofolate interconversion. The protein operates within amino-acid biosynthesis; glycine biosynthesis; glycine from L-serine: step 1/1. Catalyzes the reversible interconversion of serine and glycine with tetrahydrofolate (THF) serving as the one-carbon carrier. This reaction serves as the major source of one-carbon groups required for the biosynthesis of purines, thymidylate, methionine, and other important biomolecules. Also exhibits THF-independent aldolase activity toward beta-hydroxyamino acids, producing glycine and aldehydes, via a retro-aldol mechanism. The protein is Serine hydroxymethyltransferase of Streptococcus equi subsp. zooepidemicus (strain H70).